We begin with the raw amino-acid sequence, 531 residues long: Glucose-6-phosphate exchanger SLC37A1 (531 aa).

The helical transmembrane segment at 18-38 (QWYRAFIFMLTFLLYASFHLS) threads the bilayer. The segment at 53 to 72 (CTAGDGPESPFSDPSSSTRH) is disordered. 11 consecutive transmembrane segments (helical) span residues 100–120 (GALD…SGII), 129–149 (YLTF…LGYF), 157–177 (FYVV…PSVV), 192–214 (IMGI…AGYW), 222–242 (SFIV…LFLI), 332–352 (LCLL…PLYI), 364–384 (GELS…AGVI), 392–412 (ASTC…FSSV), 419–439 (ATIA…ALIT), 464–484 (AIID…AGLI), and 488–508 (GWSN…LFLV).

Belongs to the major facilitator superfamily. Organophosphate:Pi antiporter (OPA) (TC 2.A.1.4) family.

It localises to the endoplasmic reticulum membrane. It catalyses the reaction D-glucose 6-phosphate(in) + phosphate(out) = D-glucose 6-phosphate(out) + phosphate(in). With respect to regulation, inhibited by vanadate but not by chlorogenic acid. Its function is as follows. Inorganic phosphate and glucose-6-phosphate antiporter. May transport cytoplasmic glucose-6-phosphate into the lumen of the endoplasmic reticulum and translocate inorganic phosphate into the opposite direction. Independent of a lumenal glucose-6-phosphatase. May not play a role in homeostatic regulation of blood glucose levels. This chain is Glucose-6-phosphate exchanger SLC37A1, found in Mus musculus (Mouse).